A 356-amino-acid polypeptide reads, in one-letter code: MLERLQAVEDRYEYLNEQLSDPNVISNATKLREYSKEQAQIEETVQTYRQYKQVTEQLADAKAMLEEKLDDDMYQMVKEELDELSERKAELEERLKILLLPKDPNDDKNVIVEIRGAAGGDEAQLFAADLYKMYHRYAEMQGWKTEVIEAHATELGGYKEIIFMVNGSGAYSKLKYENGAHRVQRVPQTESGGRIHTSTATVAVLPEAEEVEIDIHEKDIRVDTFASSGPGGQSVNTTMSAVRLTHLPTNTVVSCQDEKSQIKNKEKAMKVLRARIFDKVQQEAQAEYAESRKLAVGTGDRSERIRTYNFPQSRVTDHRIGLTLQKLEQVLQGKLDEIIDALVVADQSEAMKKAEE.

Position 233 is an N5-methylglutamine (Gln233).

The protein belongs to the prokaryotic/mitochondrial release factor family. Post-translationally, methylated by PrmC. Methylation increases the termination efficiency of RF1.

Its subcellular location is the cytoplasm. Peptide chain release factor 1 directs the termination of translation in response to the peptide chain termination codons UAG and UAA. This chain is Peptide chain release factor 1, found in Shouchella clausii (strain KSM-K16) (Alkalihalobacillus clausii).